The following is a 410-amino-acid chain: MKIYLVGGAVRDALLEQPAGDRDWVVVGADQAQMEAQGFKPVGKDFPVFLHPRSGEEYALARTERKSGRGYRGFVVDADPSVTLEEDLLRRDFTINAIARDEETGELFDPYNGARDLQARVLRHVGPAFVEDPVRVLRAARFMARLAPLGFTLAADTAALMREMAASGELDSLVPERVWQELRRALSCAQPSAFLRTLHDADALRVILPEVDALYGVPQRAEFHPEVDTGIHQEMVSDMAARLAPGDALVGFAALTHDLGKALTPPEEWPRHVMHEQRGVAPLQALCERLKVPQDFRQLAIIACREHLNVHRLAELRDRTLHELLVRCDAFRRPERIAQLALVCEADKRGRLGSEEAAYPQGEALKRLHAAALAINARDLAAEGLQGPQIGEALTKARIAAIAAARRIGA.

Residues G8 and R11 each contribute to the ATP site. CTP-binding residues include G8 and R11. 2 residues coordinate Mg(2+): D21 and D23. ATP is bound by residues R91, R138, and R141. 3 residues coordinate CTP: R91, R138, and R141. In terms of domain architecture, HD spans 229-347 (TGIHQEMVSD…AQLALVCEAD (119 aa)).

The protein belongs to the tRNA nucleotidyltransferase/poly(A) polymerase family. Bacterial CCA-adding enzyme type 1 subfamily. Monomer. Can also form homodimers and oligomers. Requires Mg(2+) as cofactor. It depends on Ni(2+) as a cofactor.

The catalysed reaction is a tRNA precursor + 2 CTP + ATP = a tRNA with a 3' CCA end + 3 diphosphate. It carries out the reaction a tRNA with a 3' CCA end + 2 CTP + ATP = a tRNA with a 3' CCACCA end + 3 diphosphate. Its function is as follows. Catalyzes the addition and repair of the essential 3'-terminal CCA sequence in tRNAs without using a nucleic acid template. Adds these three nucleotides in the order of C, C, and A to the tRNA nucleotide-73, using CTP and ATP as substrates and producing inorganic pyrophosphate. tRNA 3'-terminal CCA addition is required both for tRNA processing and repair. Also involved in tRNA surveillance by mediating tandem CCA addition to generate a CCACCA at the 3' terminus of unstable tRNAs. While stable tRNAs receive only 3'-terminal CCA, unstable tRNAs are marked with CCACCA and rapidly degraded. This Xanthomonas euvesicatoria pv. vesicatoria (strain 85-10) (Xanthomonas campestris pv. vesicatoria) protein is Multifunctional CCA protein.